We begin with the raw amino-acid sequence, 456 residues long: Cysteine--tRNA ligase (456 aa).

A Zn(2+)-binding site is contributed by C29. The 'HIGH' region signature appears at 31–41 (VTVYDYCHVGH). Zn(2+) contacts are provided by C210, H235, and E239. Residues 267 to 271 (KMSKS) carry the 'KMSKS' region motif. K270 contributes to the ATP binding site.

Belongs to the class-I aminoacyl-tRNA synthetase family. In terms of assembly, monomer. Zn(2+) serves as cofactor.

It is found in the cytoplasm. It catalyses the reaction tRNA(Cys) + L-cysteine + ATP = L-cysteinyl-tRNA(Cys) + AMP + diphosphate. This Hydrogenovibrio crunogenus (strain DSM 25203 / XCL-2) (Thiomicrospira crunogena) protein is Cysteine--tRNA ligase.